Consider the following 620-residue polypeptide: 1-deoxy-D-xylulose-5-phosphate synthase (620 aa).

Thiamine diphosphate is bound by residues histidine 75 and 116-118 (AHS). Residue aspartate 147 coordinates Mg(2+). Thiamine diphosphate-binding positions include 148–149 (GA), asparagine 177, tyrosine 284, and glutamate 366. Asparagine 177 contacts Mg(2+).

This sequence belongs to the transketolase family. DXPS subfamily. In terms of assembly, homodimer. Requires Mg(2+) as cofactor. Thiamine diphosphate is required as a cofactor.

The enzyme catalyses D-glyceraldehyde 3-phosphate + pyruvate + H(+) = 1-deoxy-D-xylulose 5-phosphate + CO2. The protein operates within metabolic intermediate biosynthesis; 1-deoxy-D-xylulose 5-phosphate biosynthesis; 1-deoxy-D-xylulose 5-phosphate from D-glyceraldehyde 3-phosphate and pyruvate: step 1/1. Its function is as follows. Catalyzes the acyloin condensation reaction between C atoms 2 and 3 of pyruvate and glyceraldehyde 3-phosphate to yield 1-deoxy-D-xylulose-5-phosphate (DXP). The chain is 1-deoxy-D-xylulose-5-phosphate synthase from Bordetella bronchiseptica (strain ATCC BAA-588 / NCTC 13252 / RB50) (Alcaligenes bronchisepticus).